A 1030-amino-acid chain; its full sequence is MPRRKQQAPKRAAGYAQEEVLKEEEEIKEEEEEEEDSGSVAQHQSSNDTGTDEELETGPEQKGYFSCQNSPGSHLSNQDAENESLLSDASDQVSDVKSVCGRDVSDKKANTHPKLPSEPHNCMDKMTAVYANILSDSYWSGLGLGFKLSNSERRNCDTRNSSGKNDFDWHQDALSKSLQQNLPSRSVSKPSLFSSVQLYRQSSKLCGSVFTGASRFRCRQCSAAYDTLVELTVHMNETGHYQDDNRKKDKLRPTSYSKPRKRAFQDMDKEDAQKVLKCMFCGDSFDSLQDLSVHMIKTKHYQKVPLKEPVPTISSKMVTPAKKRVFDVNRPCSPDSTTGSLADSFSSQKSANLQLPSNSRYGYQNGASYTWQFEACKSQILKCMECGSSHDTLQQLTTHMMVTGHFLKVTSSASKKGKQLVLDPLAVEKMQSLSETPNSESLAPKPSSNSPSECTASTTELKKESKKEKGEGIEDEQGVKSEDYEDSLQKPLDPTIKYQYLREEDLEDGSKGGGDILKSLENTVTTAINKAQNGAPSWSAYPSIHAAYQLSEGTKPPMAMGSQILQIRPNLANKLRPIAPKWKGMPLGPVPTSLALYTQVKKETEDKDEVVKQCGKESPHEEATSFSQPEGESFSKIEPPSESRKAEPCPLKEEEKPQKEKPEPLEPVSSLTNGCAPANHTPALPSINPLSALQSVLNNHLGKATEPLRSPSCSSPNSSTSPVFHKSSLHVVDKPVISPTSTRPAASVARHYLFENTDQPIDLTKSKSKRAESSQAQSCTSPPQKHALCDIADMVKVLPKATTPKPAASSRVPPMKLEIDVRRFEDVSSEVSTLHKRKGRQSNWNPQHLLILQAQFASSLFQTSEGKYLLSDLGPQERMQISKFTGLSMTTISHWLANVKYQLRKTGGTKFLKNMDKGHPIFYCSDCASQFRTPSTYISHLESHLGFQMKDMTRMAADQQSKVEQEISRVSSAQRSPETIAGEEDTDSKFKCKLCRRTFVSKHAVKLHLSKTHSKSPEHHSQFVADVDEE.

The interval 1-120 is disordered; sequence MPRRKQQAPK…THPKLPSEPH (120 aa). Positions 11–42 form a coiled coil; the sequence is RAAGYAQEEVLKEEEEIKEEEEEEEDSGSVAQ. Over residues 21-37 the composition is skewed to acidic residues; it reads LKEEEEIKEEEEEEEDS. Polar residues-rich tracts occupy residues 39–49 and 66–95; these read SVAQHQSSNDT and SCQN…QVSD. Basic and acidic residues predominate over residues 103-120; that stretch reads DVSDKKANTHPKLPSEPH. Lysine 189 is covalently cross-linked (Glycyl lysine isopeptide (Lys-Gly) (interchain with G-Cter in SUMO2)). C2H2-type zinc fingers lie at residues 216-240 and 276-300; these read FRCR…ETGH and LKCM…KTKH. Residues 240-266 form a disordered region; that stretch reads HYQDDNRKKDKLRPTSYSKPRKRAFQD. Glycyl lysine isopeptide (Lys-Gly) (interchain with G-Cter in SUMO2) cross-links involve residues lysine 307 and lysine 316. The interval 328-348 is disordered; sequence VNRPCSPDSTTGSLADSFSSQ. Polar residues predominate over residues 334–348; it reads PDSTTGSLADSFSSQ. The C2H2-type 3; atypical zinc-finger motif lies at 381–405; it reads LKCMECGSSHDTLQQLTTHMMVTGH. Residue lysine 418 forms a Glycyl lysine isopeptide (Lys-Gly) (interchain with G-Cter in SUMO2) linkage. The segment covering 432-459 has biased composition (polar residues); that stretch reads SLSETPNSESLAPKPSSNSPSECTASTT. The interval 432-488 is disordered; sequence SLSETPNSESLAPKPSSNSPSECTASTTELKKESKKEKGEGIEDEQGVKSEDYEDSL. Residues 460–482 show a composition bias toward basic and acidic residues; it reads ELKKESKKEKGEGIEDEQGVKSE. Residues lysine 462, lysine 480, lysine 497, and lysine 601 each participate in a glycyl lysine isopeptide (Lys-Gly) (interchain with G-Cter in SUMO2) cross-link. 2 stretches are compositionally biased toward basic and acidic residues: residues 608-623 and 633-664; these read DEVV…HEEA and SFSK…KPEP. Disordered stretches follow at residues 608 to 687, 703 to 726, and 759 to 784; these read DEVV…LPSI, KATE…VFHK, and QPID…SPPQ. Lysine 652 is covalently cross-linked (Glycyl lysine isopeptide (Lys-Gly) (interchain with G-Cter in SUMO2)). Positions 710-722 are enriched in low complexity; sequence SPSCSSPNSSTSP. Over residues 773–783 the composition is skewed to polar residues; it reads SSQAQSCTSPP. Residues lysine 796 and lysine 816 each participate in a glycyl lysine isopeptide (Lys-Gly) (interchain with G-Cter in SUMO2) cross-link. The segment at residues 837-907 is a DNA-binding region (homeobox); sequence RKGRQSNWNP…NVKYQLRKTG (71 aa). A C2H2-type 4 zinc finger spans residues 922-944; it reads FYCSDCASQFRTPSTYISHLESH. A Glycyl lysine isopeptide (Lys-Gly) (interchain with G-Cter in SUMO2) cross-link involves residue lysine 962. Disordered stretches follow at residues 965–987 and 1009–1030; these read QEIS…EDTD and LSKT…VDEE. The segment covering 968–977 has biased composition (polar residues); that stretch reads SRVSSAQRSP. Serine 976 bears the Phosphoserine mark. Residues 990-1013 form a C2H2-type 5 zinc finger; that stretch reads FKCKLCRRTFVSKHAVKLHLSKTH.

The protein belongs to the teashirt C2H2-type zinc-finger protein family. As to quaternary structure, interacts (via homeobox domain) with APBB1 (via PID domain 1). In terms of processing, sumoylated.

Its subcellular location is the nucleus. Its function is as follows. Probable transcriptional regulator involved in developmental processes. May act as a transcriptional repressor (Potential). This Mus musculus (Mouse) protein is Teashirt homolog 2 (Tshz2).